Here is a 272-residue protein sequence, read N- to C-terminus: Prephenate dehydratase (272 aa).

The Prephenate dehydratase domain maps to 4-179 (AVIYTLPKGT…NKTRFILIGK (176 aa)). An ACT domain is found at 194-269 (IVFELKEDKP…TFINLLGKYP (76 aa)).

Homodimer.

The catalysed reaction is prephenate + H(+) = 3-phenylpyruvate + CO2 + H2O. The protein operates within amino-acid biosynthesis; L-phenylalanine biosynthesis; phenylpyruvate from prephenate: step 1/1. With respect to regulation, inhibited by L-phenylalanine but not by L-tyrosine or L-tryptophan. The protein is Prephenate dehydratase (pheA) of Methanocaldococcus jannaschii (strain ATCC 43067 / DSM 2661 / JAL-1 / JCM 10045 / NBRC 100440) (Methanococcus jannaschii).